We begin with the raw amino-acid sequence, 192 residues long: Fe/S biogenesis protein NfuA (192 aa).

Residues C149 and C152 each contribute to the [4Fe-4S] cluster site.

Belongs to the NfuA family. As to quaternary structure, homodimer. [4Fe-4S] cluster is required as a cofactor.

In terms of biological role, involved in iron-sulfur cluster biogenesis. Binds a 4Fe-4S cluster, can transfer this cluster to apoproteins, and thereby intervenes in the maturation of Fe/S proteins. Could also act as a scaffold/chaperone for damaged Fe/S proteins. This Shewanella denitrificans (strain OS217 / ATCC BAA-1090 / DSM 15013) protein is Fe/S biogenesis protein NfuA.